A 548-amino-acid chain; its full sequence is T-complex protein 1 subunit theta (548 aa).

The tract at residues 528 to 548 is disordered; it reads ATGGPKPRGPKQQDEDDDGMA.

Belongs to the TCP-1 chaperonin family. In terms of assembly, heterooligomeric complex.

The protein localises to the cytoplasm. Its function is as follows. Molecular chaperone; assists the folding of proteins upon ATP hydrolysis. Known to play a role, in vitro, in the folding of actin and tubulin. Required for correct subcellular localization of pgl-1. This chain is T-complex protein 1 subunit theta, found in Caenorhabditis briggsae.